Reading from the N-terminus, the 221-residue chain is Immunoregulatory peptides (221 aa).

The signal sequence occupies residues 1–19 (MNYLCLVVTLVAVAGAISG). Residues 20-45 (EKFSDDNTGYQSTPSLRIRTTPGRRR) constitute a propeptide that is removed on maturation. Positions 21–155 (KFSDDNTGYQ…PRTIGPPYTR (135 aa)) are disordered. A compositionally biased stretch (polar residues) spans 25-34 (DNTGYQSTPS). A compositionally biased stretch (low complexity) spans 48-69 (PRTIGPPYTRRTLRTTTDYSTT). 2 stretches are compositionally biased toward polar residues: residues 70-85 (VENG…STEK) and 123-133 (NGTTPAANSTE). Residues 191 to 221 (EISWTFGPLYTWRTTKGYGTTLETTNATSTS) constitute a propeptide that is removed on maturation.

As to expression, salivary glands.

It localises to the secreted. Functionally, suppress host inflammatory response. Exerts significant anti-inflammatory functions, either by directly inhibiting host secretion of inflammatory factors such as tumor necrosis factor-alpha (TNF), monocyte chemotactic protein-1 (CCL2), and interferon-gamma (IFNG) or by indirectly increasing the secretion of immunosuppressant cytokine of interleukin-10 (IL10). Also potently scavenges free radical in vitro in a rapid manner. All tested concentrations of this peptide have little effect on the cell viability. In vivo, inhibits hind paw adjuvant-induced inflammation in mouse in a dose-dependent manner. Its function is as follows. Suppress host inflammatory response. Exerts significant anti-inflammatory functions, either by directly inhibiting host secretion of inflammatory factors such as tumor necrosis factor-alpha (TNF), monocyte chemotactic protein-1 (CCL2), and interferon-gamma (IFNG) or by indirectly increasing the secretion of immunosuppressant cytokine of interleukin-10 (IL10). Also potently scavenges free radical in vitro in a rapid manner. Low concentrations of this peptide have little effect on the cell viability, whereas high concentrations increase the cell viability by 10-20%. In vivo, inhibits hind paw adjuvant-induced inflammation in mouse in a dose-dependent manner. Not studied but probably similar to Hyalomin-B1. This is Immunoregulatory peptides from Hyalomma asiaticum asiaticum (Tick).